The primary structure comprises 143 residues: Sporulation-specific protein 73 (143 aa).

Belongs to the SPO73 family. As to quaternary structure, interacts with SPO71.

Its subcellular location is the cytoplasm. It localises to the prospore membrane. Its function is as follows. Required for spore wall assembly and ascus formation. Involved in the formation and elongation of prospore membranes. The sequence is that of Sporulation-specific protein 73 from Saccharomyces cerevisiae (strain ATCC 204508 / S288c) (Baker's yeast).